The primary structure comprises 612 residues: Peroxisomal carnitine O-octanoyltransferase (612 aa).

N-acetylmethionine is present on Met1. Lys40 and Lys57 each carry N6-succinyllysine. Residue His327 is the Proton acceptor of the active site. CoA-binding positions include Lys406 and 410–417; that span reads KNKMLHPD. N6-acetyllysine; alternate is present on Lys406. At Lys406 the chain carries N6-succinyllysine; alternate. (R)-carnitine is bound by residues Tyr439, Thr441, and Thr452. Positions 610-612 match the Microbody targeting signal motif; sequence THL.

This sequence belongs to the carnitine/choline acetyltransferase family. As to quaternary structure, monomer.

The protein resides in the peroxisome. The enzyme catalyses octanoyl-CoA + (R)-carnitine = O-octanoyl-(R)-carnitine + CoA. It carries out the reaction 4,8-dimethylnonanoyl-CoA + (R)-carnitine = O-4,8-dimethylnonanoyl-(R)-carnitine + CoA. Its pathway is lipid metabolism; fatty acid beta-oxidation. Beta-oxidation of fatty acids. The highest activity concerns the C6 to C10 chain length substrate. Converts the end product of pristanic acid beta oxidation, 4,8-dimethylnonanoyl-CoA, to its corresponding carnitine ester. The chain is Peroxisomal carnitine O-octanoyltransferase (CROT) from Homo sapiens (Human).